Here is a 238-residue protein sequence, read N- to C-terminus: Protein TIFY 3A (238 aa).

The 36-residue stretch at 39–74 (EPDASTQLTIIFGGSCRVFNGVPAQKVQEIIRIAFA) folds into the Tify 1 domain. A Jas 1 motif is present at residues 101–120 (PIARRRSLQRFLEKRRDRST). Residues 103–110 (ARRRSLQR) carry the Nuclear localization signal 1 motif. The 36-residue stretch at 125-160 (SMILPSQLTIIFGGSFSVFDGIPAEKVQEILHIAAA) folds into the Tify 2 domain. A Jas 2 motif is present at residues 197 to 222 (PIARRRSLQRFFEKRRHRFVHTKPYS). The short motif at 199–206 (ARRRSLQR) is the Nuclear localization signal 2 element. The interval 219 to 238 (KPYSATTSEADKNETSPIVT) is disordered.

The protein belongs to the TIFY/JAZ family. As to quaternary structure, interacts with MYC2, MYB21, MYB24, AFPH2/NINJA, TIFY10A/JAZ1, TIFY10B/JAZ2, TIFY6B/JAZ3, TIFY6A/JAZ4, TIFY7/JAZ9 and TIFY9/JAZ10. In terms of processing, ubiquitinated. Targeted for degradation by the SCF(COI1) E3 ubiquitin ligase-proteasome pathway during jasmonate signaling.

It localises to the nucleus. Repressor of jasmonate (JA) responses. Targets MYC2, MYC3 and MYC4 that are JA-dependent transcription activators. The chain is Protein TIFY 3A (TIFY3A) from Arabidopsis thaliana (Mouse-ear cress).